The following is a 179-amino-acid chain: MVQAWYMDDAPGDPRQPHRPDPDRPVGLEQLRRLGVLYWKLDADKYENDPELEKIRRERNYSWMDIITICKDKLPNYEEKIKMFYEEHLHLDDEIRYILDGSGYFDVRDKEDKWIRIFMEKGDMITLPAGIYHRFTVDEKNYAKAMRLFVGEPVWTAYNRPADHFEARGQYMKFLAQTA.

Fe(2+) contacts are provided by H88, H90, E94, and H133. 4 residues coordinate Ni(2+): H88, H90, E94, and H133.

Belongs to the acireductone dioxygenase (ARD) family. In terms of assembly, monomer. Interacts with MMP14. The cofactor is Fe(2+). It depends on Ni(2+) as a cofactor.

The protein resides in the cytoplasm. Its subcellular location is the nucleus. It is found in the cell membrane. The catalysed reaction is 1,2-dihydroxy-5-(methylsulfanyl)pent-1-en-3-one + O2 = 4-methylsulfanyl-2-oxobutanoate + formate + 2 H(+). It catalyses the reaction 1,2-dihydroxy-5-(methylsulfanyl)pent-1-en-3-one + O2 = 3-(methylsulfanyl)propanoate + CO + formate + 2 H(+). The protein operates within amino-acid biosynthesis; L-methionine biosynthesis via salvage pathway; L-methionine from S-methyl-5-thio-alpha-D-ribose 1-phosphate: step 5/6. In terms of biological role, catalyzes 2 different reactions between oxygen and the acireductone 1,2-dihydroxy-3-keto-5-methylthiopentene (DHK-MTPene) depending upon the metal bound in the active site. Fe-containing acireductone dioxygenase (Fe-ARD) produces formate and 2-keto-4-methylthiobutyrate (KMTB), the alpha-ketoacid precursor of methionine in the methionine recycle pathway. Ni-containing acireductone dioxygenase (Ni-ARD) produces methylthiopropionate, carbon monoxide and formate, and does not lie on the methionine recycle pathway. Also down-regulates cell migration mediated by MMP14. The sequence is that of Acireductone dioxygenase from Macaca mulatta (Rhesus macaque).